The sequence spans 295 residues: Phosphoribosylaminoimidazole-succinocarboxamide synthase (295 aa).

It belongs to the SAICAR synthetase family.

It catalyses the reaction 5-amino-1-(5-phospho-D-ribosyl)imidazole-4-carboxylate + L-aspartate + ATP = (2S)-2-[5-amino-1-(5-phospho-beta-D-ribosyl)imidazole-4-carboxamido]succinate + ADP + phosphate + 2 H(+). It participates in purine metabolism; IMP biosynthesis via de novo pathway; 5-amino-1-(5-phospho-D-ribosyl)imidazole-4-carboxamide from 5-amino-1-(5-phospho-D-ribosyl)imidazole-4-carboxylate: step 1/2. The protein is Phosphoribosylaminoimidazole-succinocarboxamide synthase of Halorhodospira halophila (strain DSM 244 / SL1) (Ectothiorhodospira halophila (strain DSM 244 / SL1)).